A 171-amino-acid chain; its full sequence is S-ribosylhomocysteine lyase (171 aa).

3 residues coordinate Fe cation: His54, His58, and Cys128.

The protein belongs to the LuxS family. Homodimer. Requires Fe cation as cofactor.

It catalyses the reaction S-(5-deoxy-D-ribos-5-yl)-L-homocysteine = (S)-4,5-dihydroxypentane-2,3-dione + L-homocysteine. Functionally, involved in the synthesis of autoinducer 2 (AI-2) which is secreted by bacteria and is used to communicate both the cell density and the metabolic potential of the environment. The regulation of gene expression in response to changes in cell density is called quorum sensing. Catalyzes the transformation of S-ribosylhomocysteine (RHC) to homocysteine (HC) and 4,5-dihydroxy-2,3-pentadione (DPD). The sequence is that of S-ribosylhomocysteine lyase from Yersinia enterocolitica serotype O:8 / biotype 1B (strain NCTC 13174 / 8081).